A 327-amino-acid chain; its full sequence is Ferrochelatase (327 aa).

Fe cation contacts are provided by histidine 187 and glutamate 265.

Belongs to the ferrochelatase family.

Its subcellular location is the cytoplasm. The enzyme catalyses heme b + 2 H(+) = protoporphyrin IX + Fe(2+). The protein operates within porphyrin-containing compound metabolism; protoheme biosynthesis; protoheme from protoporphyrin-IX: step 1/1. Functionally, catalyzes the ferrous insertion into protoporphyrin IX. This chain is Ferrochelatase, found in Chlamydia pneumoniae (Chlamydophila pneumoniae).